The sequence spans 428 residues: Chaperone SurA (428 aa).

Positions 1–20 are cleaved as a signal peptide; that stretch reads MKNWKTLLLGIAMIANTSFA. 2 PpiC domains span residues 171–272 and 282–382; these read STEL…KVND and VTEV…ELLD.

The protein localises to the periplasm. The enzyme catalyses [protein]-peptidylproline (omega=180) = [protein]-peptidylproline (omega=0). Its function is as follows. Chaperone involved in the correct folding and assembly of outer membrane proteins. Recognizes specific patterns of aromatic residues and the orientation of their side chains, which are found more frequently in integral outer membrane proteins. May act in both early periplasmic and late outer membrane-associated steps of protein maturation. In Salmonella paratyphi A (strain ATCC 9150 / SARB42), this protein is Chaperone SurA.